The following is a 324-amino-acid chain: tRNA uridine(34) hydroxylase (324 aa).

The 95-residue stretch at 145–239 (NDKKTIFIDM…YVHDARKNGL (95 aa)) folds into the Rhodanese domain. Cys199 (cysteine persulfide intermediate) is an active-site residue.

This sequence belongs to the TrhO family.

It catalyses the reaction uridine(34) in tRNA + AH2 + O2 = 5-hydroxyuridine(34) in tRNA + A + H2O. Catalyzes oxygen-dependent 5-hydroxyuridine (ho5U) modification at position 34 in tRNAs. This Buchnera aphidicola subsp. Acyrthosiphon pisum (strain Tuc7) protein is tRNA uridine(34) hydroxylase.